A 270-amino-acid chain; its full sequence is 4-hydroxy-tetrahydrodipicolinate reductase (270 aa).

NAD(+) is bound at residue 7–12 (GVSGRM). Arg-34 contacts NADP(+). Residues 97–99 (GTT) and 121–124 (SGNM) contribute to the NAD(+) site. His-155 functions as the Proton donor/acceptor in the catalytic mechanism. Position 156 (His-156) interacts with (S)-2,3,4,5-tetrahydrodipicolinate. Lys-159 serves as the catalytic Proton donor. 165 to 166 (GT) provides a ligand contact to (S)-2,3,4,5-tetrahydrodipicolinate.

The protein belongs to the DapB family.

It localises to the cytoplasm. The enzyme catalyses (S)-2,3,4,5-tetrahydrodipicolinate + NAD(+) + H2O = (2S,4S)-4-hydroxy-2,3,4,5-tetrahydrodipicolinate + NADH + H(+). The catalysed reaction is (S)-2,3,4,5-tetrahydrodipicolinate + NADP(+) + H2O = (2S,4S)-4-hydroxy-2,3,4,5-tetrahydrodipicolinate + NADPH + H(+). The protein operates within amino-acid biosynthesis; L-lysine biosynthesis via DAP pathway; (S)-tetrahydrodipicolinate from L-aspartate: step 4/4. Functionally, catalyzes the conversion of 4-hydroxy-tetrahydrodipicolinate (HTPA) to tetrahydrodipicolinate. The polypeptide is 4-hydroxy-tetrahydrodipicolinate reductase (Allorhizobium ampelinum (strain ATCC BAA-846 / DSM 112012 / S4) (Agrobacterium vitis (strain S4))).